We begin with the raw amino-acid sequence, 267 residues long: Sepiapterin reductase (267 aa).

N-acetylmethionine is present on Met1. 20–26 (GASRGFG) provides a ligand contact to NADP(+). Ser38 is subject to Phosphoserine. Residues 48 to 49 (RN) and 75 to 76 (DL) each bind NADP(+). Substrate-binding positions include 163-164 (SI) and Tyr176. Lys180 contacts NADP(+). Ser201 bears the Phosphoserine mark. Gly205 serves as a coordination point for substrate. 207-212 (LDTDMQ) is an NADP(+) binding site. A Phosphoserine modification is found at Ser219. Asp263 contributes to the substrate binding site.

The protein belongs to the sepiapterin reductase family. In terms of assembly, homodimer.

It localises to the cytoplasm. It catalyses the reaction L-erythro-7,8-dihydrobiopterin + NADP(+) = L-sepiapterin + NADPH + H(+). The enzyme catalyses (6R)-L-erythro-5,6,7,8-tetrahydrobiopterin + 2 NADP(+) = 6-pyruvoyl-5,6,7,8-tetrahydropterin + 2 NADPH + 2 H(+). Catalyzes the final one or two reductions in tetra-hydrobiopterin biosynthesis to form 5,6,7,8-tetrahydrobiopterin. In Bos taurus (Bovine), this protein is Sepiapterin reductase (SPR).